Here is a 524-residue protein sequence, read N- to C-terminus: MLWAFIVWLGALCIYGSAFDILIYAPRMMQSHVYFTARIANVLAARGHKVTVIDNVFRYDVDNELSSDIHEIISVEPSPEVTKLLNTGSLPTILWNSKASPEEQRTIMEGLGHVHRLQCTHLIENSTLIPKLQEIKFDFAIHEVFDSCGVGILEVIGVQKTVIVSSTGPMDVVPITLGISDTLNTPSLLSDYGSYLSFFEKRRNLKFLSGMLNFHEMQDSMISPLFKKYYGLKKPTGEIMRQANLLFYNIHEGSDGMRMRGRRSFDIGGIAFKDQKNLTMEYQTLLSDPRPKVLVSFGTAATSSHMPQNLKNSLMTAMKQMNNVLFIWKYEMEDNFTKQEELTTNIIFKKFLPQTDLLASSKIDLFVTHCGQNSLLEAFNSGVRVLAVPLFGDQHRNAKLAFENGLIEILPKSDIETPAKIVKAVKTGLEPNAKLDQNIVLISSLLRNSKENAENLLISTIEATYSTEFPPNFSKFPKNYHPNTLVRLIDSSIALVFMLFIFVFVNHFRKNYVGFKYPLSFSTK.

Positions 1–20 (MLWAFIVWLGALCIYGSAFD) are cleaved as a signal peptide. N-linked (GlcNAc...) asparagine glycans are attached at residues asparagine 125, asparagine 277, and asparagine 335. Residues 488 to 508 (LIDSSIALVFMLFIFVFVNHF) traverse the membrane as a helical segment.

It belongs to the UDP-glycosyltransferase family.

The protein localises to the membrane. It catalyses the reaction glucuronate acceptor + UDP-alpha-D-glucuronate = acceptor beta-D-glucuronoside + UDP + H(+). This chain is Putative UDP-glucuronosyltransferase ugt-56 (ugt-56), found in Caenorhabditis elegans.